The sequence spans 102 residues: Small ribosomal subunit protein uS10 (102 aa).

This sequence belongs to the universal ribosomal protein uS10 family. Part of the 30S ribosomal subunit.

Functionally, involved in the binding of tRNA to the ribosomes. This chain is Small ribosomal subunit protein uS10, found in Mycoplasma capricolum subsp. capricolum (strain California kid / ATCC 27343 / NCTC 10154).